The following is a 304-amino-acid chain: MEKFELHILGCGSALPTTRHFATSQVVNLRDKLFMIDCGEGAQMQLRKSRLKFSRLNHIFISHLHGDHCFGLMGLISTFGLLGRTAELHIHSPKGLEELLTPMLNFFCHTLAYKVIFHEFDTRQTSVVYEDRSMTVTTIPLQHRIPCCGFLFAEKARPNHIIRDMVDFYKVPVYELNRIKNGSDYVTPEGEVIANTRLTRPSDPPRKYAYCSDTIFRPEIVEQLSGVDLLFHEATFAESELARAKETYHTTAAQAARIALEAGVRQLVIGHFSARYEDESILLKEASAVFPNTILAKENLCISL.

Residues histidine 63, histidine 65, aspartate 67, histidine 68, histidine 143, aspartate 213, and histidine 271 each coordinate Zn(2+). Aspartate 67 serves as the catalytic Proton acceptor.

The protein belongs to the RNase Z family. As to quaternary structure, homodimer. Zn(2+) serves as cofactor.

The catalysed reaction is Endonucleolytic cleavage of RNA, removing extra 3' nucleotides from tRNA precursor, generating 3' termini of tRNAs. A 3'-hydroxy group is left at the tRNA terminus and a 5'-phosphoryl group is left at the trailer molecule.. Functionally, zinc phosphodiesterase, which displays some tRNA 3'-processing endonuclease activity. Probably involved in tRNA maturation, by removing a 3'-trailer from precursor tRNA. The sequence is that of Ribonuclease Z from Bacteroides fragilis (strain YCH46).